A 79-amino-acid chain; its full sequence is UPF0154 protein SAG1601 (79 aa).

A helical membrane pass occupies residues 5 to 25 (IWILLIIVALFGGLVGGIFIA).

It belongs to the UPF0154 family.

The protein localises to the membrane. The protein is UPF0154 protein SAG1601 of Streptococcus agalactiae serotype V (strain ATCC BAA-611 / 2603 V/R).